The following is a 326-amino-acid chain: Flap endonuclease 1 (326 aa).

An N-domain region spans residues 1-98 (MGVQFNDSIP…KTREERRKVK (98 aa)). Mg(2+) contacts are provided by D27, D80, E152, E154, D173, D175, and D224. The segment at 116-245 (DMQKYAKRIN…KKALTIIKNK (130 aa)) is I-domain. The interval 318 to 326 (SQTSLDSWF) is interaction with PCNA.

The protein belongs to the XPG/RAD2 endonuclease family. FEN1 subfamily. Interacts with PCNA. PCNA stimulates the nuclease activity without altering cleavage specificity. The cofactor is Mg(2+).

Structure-specific nuclease with 5'-flap endonuclease and 5'-3' exonuclease activities involved in DNA replication and repair. During DNA replication, cleaves the 5'-overhanging flap structure that is generated by displacement synthesis when DNA polymerase encounters the 5'-end of a downstream Okazaki fragment. Binds the unpaired 3'-DNA end and kinks the DNA to facilitate 5' cleavage specificity. Cleaves one nucleotide into the double-stranded DNA from the junction in flap DNA, leaving a nick for ligation. Also involved in the base excision repair (BER) pathway. Acts as a genome stabilization factor that prevents flaps from equilibrating into structures that lead to duplications and deletions. Also possesses 5'-3' exonuclease activity on nicked or gapped double-stranded DNA. In Methanococcus aeolicus (strain ATCC BAA-1280 / DSM 17508 / OCM 812 / Nankai-3), this protein is Flap endonuclease 1.